Consider the following 452-residue polypeptide: Bifunctional purine biosynthesis protein PurH (452 aa).

The MGS-like domain occupies 1–115; the sequence is MKRILVSLYE…KNWKKVKPAF (115 aa).

It belongs to the PurH family.

It carries out the reaction (6R)-10-formyltetrahydrofolate + 5-amino-1-(5-phospho-beta-D-ribosyl)imidazole-4-carboxamide = 5-formamido-1-(5-phospho-D-ribosyl)imidazole-4-carboxamide + (6S)-5,6,7,8-tetrahydrofolate. The enzyme catalyses IMP + H2O = 5-formamido-1-(5-phospho-D-ribosyl)imidazole-4-carboxamide. Its pathway is purine metabolism; IMP biosynthesis via de novo pathway; 5-formamido-1-(5-phospho-D-ribosyl)imidazole-4-carboxamide from 5-amino-1-(5-phospho-D-ribosyl)imidazole-4-carboxamide (10-formyl THF route): step 1/1. It functions in the pathway purine metabolism; IMP biosynthesis via de novo pathway; IMP from 5-formamido-1-(5-phospho-D-ribosyl)imidazole-4-carboxamide: step 1/1. The chain is Bifunctional purine biosynthesis protein PurH from Thermotoga maritima (strain ATCC 43589 / DSM 3109 / JCM 10099 / NBRC 100826 / MSB8).